The chain runs to 279 residues: Cytochrome c1 (279 aa).

Positions 1–21 (MKKLLISAVSALVLGSGAAFA) are cleaved as a signal peptide. Positions 55, 58, 59, and 204 each coordinate heme c. Residues 248 to 266 (MGLVAMVMLGLLSVMLYLT) form a helical membrane-spanning segment.

As to quaternary structure, the main subunits of complex b-c1 are: cytochrome b, cytochrome c1 and the Rieske protein. Post-translationally, binds 1 heme c group covalently per subunit.

The protein resides in the cell membrane. Component of the ubiquinol-cytochrome c reductase complex (complex III or cytochrome b-c1 complex), which is a respiratory chain that generates an electrochemical potential coupled to ATP synthesis. c1 functions as an electron donor to cytochrome c. This is Cytochrome c1 (petC) from Rhodobacter capsulatus (strain ATCC BAA-309 / NBRC 16581 / SB1003).